The following is a 156-amino-acid chain: Ribosomal RNA large subunit methyltransferase H (156 aa).

S-adenosyl-L-methionine is bound by residues Leu73, Gly104, and 123-128 (IGPLTL).

It belongs to the RNA methyltransferase RlmH family. In terms of assembly, homodimer.

It localises to the cytoplasm. The enzyme catalyses pseudouridine(1915) in 23S rRNA + S-adenosyl-L-methionine = N(3)-methylpseudouridine(1915) in 23S rRNA + S-adenosyl-L-homocysteine + H(+). Functionally, specifically methylates the pseudouridine at position 1915 (m3Psi1915) in 23S rRNA. The chain is Ribosomal RNA large subunit methyltransferase H from Xanthomonas oryzae pv. oryzae (strain MAFF 311018).